Reading from the N-terminus, the 430-residue chain is tRNA-2-methylthio-N(6)-dimethylallyladenosine synthase (430 aa).

Residues K2 to N111 form the MTTase N-terminal domain. Positions 11, 47, 76, 147, 151, and 154 each coordinate [4Fe-4S] cluster. A Radical SAM core domain is found at R133–Q364. Residues E367 to K428 enclose the TRAM domain.

Belongs to the methylthiotransferase family. MiaB subfamily. In terms of assembly, monomer. The cofactor is [4Fe-4S] cluster.

The protein resides in the cytoplasm. The enzyme catalyses N(6)-dimethylallyladenosine(37) in tRNA + (sulfur carrier)-SH + AH2 + 2 S-adenosyl-L-methionine = 2-methylsulfanyl-N(6)-dimethylallyladenosine(37) in tRNA + (sulfur carrier)-H + 5'-deoxyadenosine + L-methionine + A + S-adenosyl-L-homocysteine + 2 H(+). Functionally, catalyzes the methylthiolation of N6-(dimethylallyl)adenosine (i(6)A), leading to the formation of 2-methylthio-N6-(dimethylallyl)adenosine (ms(2)i(6)A) at position 37 in tRNAs that read codons beginning with uridine. The protein is tRNA-2-methylthio-N(6)-dimethylallyladenosine synthase of Thermosipho melanesiensis (strain DSM 12029 / CIP 104789 / BI429).